A 208-amino-acid polypeptide reads, in one-letter code: Single-stranded DNA-binding protein DdrA (208 aa).

Belongs to the RAD52 family. Homooligomer composed of 8 to 10 subunits; probably arranged in a ring-structure.

SsDNA-binding protein that contributes to the ionizing radiation resistance of D.radiodurans. Plays a role in DNA repair and genome reconstitution, in a RecA-independent process, since DdrA is essential for recovery from severe genomic fragmentation as a result of exposure to severe levels of ionizing radiation in an environment lacking nutrients. In vitro, binds to the 3'-ends of single-stranded DNA, protecting them from nuclease degradation. Thus, DdrA is part of a DNA end-protection system that helps to preserve genome integrity following irradiation or desiccation. Does not display DNA strand annealing activity, unlike eukaryotic Rad52 protein homologs. The protein is Single-stranded DNA-binding protein DdrA (ddrA) of Deinococcus radiodurans (strain ATCC 13939 / DSM 20539 / JCM 16871 / CCUG 27074 / LMG 4051 / NBRC 15346 / NCIMB 9279 / VKM B-1422 / R1).